A 1379-amino-acid polypeptide reads, in one-letter code: DNA-directed RNA polymerase subunit beta (1379 aa).

This sequence belongs to the RNA polymerase beta chain family. The RNAP catalytic core consists of 2 alpha, 1 beta, 1 beta' and 1 omega subunit. When a sigma factor is associated with the core the holoenzyme is formed, which can initiate transcription.

It catalyses the reaction RNA(n) + a ribonucleoside 5'-triphosphate = RNA(n+1) + diphosphate. DNA-dependent RNA polymerase catalyzes the transcription of DNA into RNA using the four ribonucleoside triphosphates as substrates. The sequence is that of DNA-directed RNA polymerase subunit beta from Chelativorans sp. (strain BNC1).